The sequence spans 114 residues: C-X-C motif chemokine 5 (114 aa).

A signal peptide spans 1–36; it reads MSLLSSRAARVPGPSSSLCALLVLLLLLTQPGPIAS. 2 cysteine pairs are disulfide-bonded: cysteine 49–cysteine 75 and cysteine 51–cysteine 91.

The protein belongs to the intercrine alpha (chemokine CxC) family. As to quaternary structure, monomer. Homodimer. N-terminal processed forms ENA-78(8-78) and ENA-78(9-78) are produced by proteolytic cleavage after secretion from peripheral blood monocytes.

The protein localises to the secreted. Involved in neutrophil activation. In vitro, ENA-78(8-78) and ENA-78(9-78) show a threefold higher chemotactic activity for neutrophil granulocytes. The sequence is that of C-X-C motif chemokine 5 (CXCL5) from Homo sapiens (Human).